A 163-amino-acid polypeptide reads, in one-letter code: Beta-lactoglobulin-2 (163 aa).

2 disulfides stabilise this stretch: cysteine 66–cysteine 161 and cysteine 106–cysteine 120.

Belongs to the calycin superfamily. Lipocalin family. As to quaternary structure, monomer.

The protein localises to the secreted. In terms of biological role, lactoglobulin is the primary component of whey, it binds retinol and is probably involved in the transport of that molecule. The sequence is that of Beta-lactoglobulin-2 (LGB2) from Equus asinus (Donkey).